A 208-amino-acid polypeptide reads, in one-letter code: Small ribosomal subunit protein uS2 (208 aa).

Residues 189-208 are disordered; it reads KPDQDLPVPPEEFETKLVQS.

It belongs to the universal ribosomal protein uS2 family.

This Pyrobaculum aerophilum (strain ATCC 51768 / DSM 7523 / JCM 9630 / CIP 104966 / NBRC 100827 / IM2) protein is Small ribosomal subunit protein uS2 (rps2).